The following is a 323-amino-acid chain: o-succinylbenzoate synthase (323 aa).

Catalysis depends on K134, which acts as the Proton donor. D162, E191, and D214 together coordinate Mg(2+). K236 acts as the Proton acceptor in catalysis.

The protein belongs to the mandelate racemase/muconate lactonizing enzyme family. MenC type 1 subfamily. A divalent metal cation is required as a cofactor.

The catalysed reaction is (1R,6R)-6-hydroxy-2-succinyl-cyclohexa-2,4-diene-1-carboxylate = 2-succinylbenzoate + H2O. The protein operates within quinol/quinone metabolism; 1,4-dihydroxy-2-naphthoate biosynthesis; 1,4-dihydroxy-2-naphthoate from chorismate: step 4/7. Its pathway is quinol/quinone metabolism; menaquinone biosynthesis. Converts 2-succinyl-6-hydroxy-2,4-cyclohexadiene-1-carboxylate (SHCHC) to 2-succinylbenzoate (OSB). In Photorhabdus laumondii subsp. laumondii (strain DSM 15139 / CIP 105565 / TT01) (Photorhabdus luminescens subsp. laumondii), this protein is o-succinylbenzoate synthase.